We begin with the raw amino-acid sequence, 226 residues long: tRNA (guanine-N(1)-)-methyltransferase (226 aa).

S-adenosyl-L-methionine contacts are provided by residues glycine 112 and 132–137 (IGDYVL).

The protein belongs to the RNA methyltransferase TrmD family. Homodimer.

It is found in the cytoplasm. It carries out the reaction guanosine(37) in tRNA + S-adenosyl-L-methionine = N(1)-methylguanosine(37) in tRNA + S-adenosyl-L-homocysteine + H(+). Specifically methylates guanosine-37 in various tRNAs. The polypeptide is tRNA (guanine-N(1)-)-methyltransferase (Flavobacterium johnsoniae (strain ATCC 17061 / DSM 2064 / JCM 8514 / BCRC 14874 / CCUG 350202 / NBRC 14942 / NCIMB 11054 / UW101) (Cytophaga johnsonae)).